Consider the following 205-residue polypeptide: uncharacterized protein (205 aa).

The protein belongs to the flavoredoxin family. FMN serves as cofactor.

This is an uncharacterized protein from Bacillus subtilis (strain 168).